An 87-amino-acid polypeptide reads, in one-letter code: Phytosulfokines 1 (87 aa).

A signal peptide spans 1-24 (MMKTKSEVLIFFFTLVLLLSMASS). Residues 25–76 (VILREDGFAPPKPSPTTHEKASTKGDRDGVECKNSDSEEECLVKKTVAAHTD) constitute a propeptide that is removed on maturation. Residues 31–59 (GFAPPKPSPTTHEKASTKGDRDGVECKNS) are disordered. A compositionally biased stretch (basic and acidic residues) spans 41–59 (THEKASTKGDRDGVECKNS). Residues Y77 and Y79 each carry the sulfotyrosine modification. The propeptide occupies 82 to 87 (DLNLSP).

The protein belongs to the phytosulfokine family. Post-translationally, sulfation is important for activity and for the binding to a putative membrane receptor. PSK-beta is produced from PSK-alpha by exopeptidase digestion. As to expression, expressed only in roots.

It is found in the secreted. Its function is as follows. Promotes plant cell differentiation, organogenesis and somatic embryogenesis as well as cell proliferation. The sequence is that of Phytosulfokines 1 (PSK1) from Arabidopsis thaliana (Mouse-ear cress).